Reading from the N-terminus, the 354-residue chain is Galactoside alpha-(1,2)-fucosyltransferase 2 (354 aa).

Residues 1-5 (MASAQ) lie on the Cytoplasmic side of the membrane. The chain crosses the membrane as a helical; Signal-anchor for type II membrane protein span at residues 6–26 (VPFSFPLAHFLIFVFVTSTIT). Residues 27–354 (HLQQRIVKLQ…PADLSPLLKH (328 aa)) are Lumenal-facing. The interval 43–68 (LPMTTQMSSGNTESPEMRRDSEQHGN) is disordered. Residues 45 to 56 (MTTQMSSGNTES) show a composition bias toward polar residues. Residues 57–68 (PEMRRDSEQHGN) show a composition bias toward basic and acidic residues. An N-linked (GlcNAc...) asparagine glycan is attached at N199.

Belongs to the glycosyltransferase 11 family. In terms of tissue distribution, specifically expressed in gut.

It is found in the golgi apparatus. The protein localises to the golgi stack membrane. It carries out the reaction a beta-D-galactosyl-(1-&gt;3)-N-acetyl-beta-D-glucosaminyl derivative + GDP-beta-L-fucose = an alpha-L-Fuc-(1-&gt;2)-beta-D-Gal-(1-&gt;3)-beta-D-GlcNAc derivative + GDP + H(+). It catalyses the reaction a beta-D-galactosyl-(1-&gt;4)-N-acetyl-beta-D-glucosaminyl derivative + GDP-beta-L-fucose = an alpha-L-Fuc-(1-&gt;2)-beta-D-Gal-(1-&gt;4)-beta-D-GlcNAc derivative + GDP + H(+). The catalysed reaction is a ganglioside GM1 (d18:1(4E)) + GDP-beta-L-fucose = a ganglioside Fuc-GM1 (d18:1(4E)) + GDP + H(+). The enzyme catalyses a globoside GalGb4Cer (d18:1(4E)) + GDP-beta-L-fucose = a globoside Globo-H (d18:1(4E)) + GDP + H(+). It carries out the reaction a neolactoside nLc4Cer + GDP-beta-L-fucose = a neolactoside IV(2)-alpha-Fuc-nLc4Cer + GDP + H(+). It catalyses the reaction a neolactoside nLc4Cer(d18:1(4E)) + GDP-beta-L-fucose = a neolactoside IV(2)-alpha-Fuc-nLc4Cer(d18:1(4E)) + GDP + H(+). The catalysed reaction is a ganglioside GM1 + GDP-beta-L-fucose = a ganglioside Fuc-GM1 + GDP + H(+). The enzyme catalyses a ganglioside GA1 + GDP-beta-L-fucose = a ganglioside Fuc-GA1 + GDP + H(+). It carries out the reaction Lc4Cer + GDP-beta-L-fucose = alpha-L-fucosyl-(1-&gt;2)-beta-D-galactosyl-(1-&gt;3)-N-acetyl-beta-D-glucosaminyl-(1-&gt;3)-beta-D-galactosyl-(1-&gt;4)-beta-D-glucosyl-(1&lt;-&gt;1')-ceramide + GDP + H(+). It catalyses the reaction a beta-D-Gal-(1-&gt;3)-beta-D-GlcNAc-(1-&gt;3)-beta-D-Gal-(1-&gt;4)-beta-D-Glc-(1&lt;-&gt;1')-Cer(d18:1(4E)) + GDP-beta-L-fucose = alpha-L-fucosyl-(1-&gt;2)- beta-D-galactosyl-(1-&gt;3)-N-acetyl-beta-D-glucosaminyl-(1-&gt;3)-beta-D-galactosyl-(1-&gt;4)-beta-D-glucosyl-(1&lt;-&gt;1')-N-acylsphing-4-enine + GDP + H(+). The catalysed reaction is a ganglioside GD1b + GDP-beta-L-fucose = a ganglioside Fuc-GD1b + GDP + H(+). The enzyme catalyses a lactoside III(4)-a-Fuc-Lc4Cer + GDP-beta-L-fucose = a lactoside IV(2),III(4)-a-[Fuc]2-Lc4Cer + GDP + H(+). It carries out the reaction beta-D-galactosyl-(1-&gt;3)-N-acetyl-D-galactosamine + GDP-beta-L-fucose = alpha-L-fucosyl-(1-&gt;2)-beta-D-galactosyl-(1-&gt;3)-N-acetyl-D-galactosamine + GDP + H(+). Its pathway is protein modification; protein glycosylation. Catalyzes the transfer of L-fucose, from a guanosine diphosphate-beta-L-fucose, to the terminal galactose on both O- and N-linked glycans chains of cell surface glycoproteins and glycolipids and the resulting epitope regulates several processes such as cell-cell interaction including host-microbe interaction, cell surface expression and cell proliferation. Preferentially fucosylates gangliosides GA1 and GM1 in the antrum, cecum and colon and in the female reproductive organs. Fucosylated host glycoproteins or glycolipids mediate interaction with intestinal microbiota influencing its composition. Creates a soluble precursor oligosaccharide FuC-alpha ((1,2)Galbeta-) called the H antigen which is an essential substrate for the final step in the soluble ABO blood group antigen synthesis pathway. The polypeptide is Galactoside alpha-(1,2)-fucosyltransferase 2 (Rattus norvegicus (Rat)).